Consider the following 167-residue polypeptide: MNKKPTKDKANGAKATKTIALNKRARHEYHLEERYEAGLALQGWEIKAIRAGRANIVDGYAYVRSGEIYLIGAQITPLIQASTHTVPVERRDRKLLLHRAEIDKVLTRVEREGYTLVPTALYWSSNKVKLEIALAKGKQNHDKRDAAKERDWQRDKQRVMRRHNRDA.

Over residues 139 to 158 (QNHDKRDAAKERDWQRDKQR) the composition is skewed to basic and acidic residues. Residues 139–167 (QNHDKRDAAKERDWQRDKQRVMRRHNRDA) form a disordered region.

It belongs to the SmpB family.

Its subcellular location is the cytoplasm. Functionally, required for rescue of stalled ribosomes mediated by trans-translation. Binds to transfer-messenger RNA (tmRNA), required for stable association of tmRNA with ribosomes. tmRNA and SmpB together mimic tRNA shape, replacing the anticodon stem-loop with SmpB. tmRNA is encoded by the ssrA gene; the 2 termini fold to resemble tRNA(Ala) and it encodes a 'tag peptide', a short internal open reading frame. During trans-translation Ala-aminoacylated tmRNA acts like a tRNA, entering the A-site of stalled ribosomes, displacing the stalled mRNA. The ribosome then switches to translate the ORF on the tmRNA; the nascent peptide is terminated with the 'tag peptide' encoded by the tmRNA and targeted for degradation. The ribosome is freed to recommence translation, which seems to be the essential function of trans-translation. This chain is SsrA-binding protein, found in Xanthomonas oryzae pv. oryzae (strain MAFF 311018).